A 727-amino-acid polypeptide reads, in one-letter code: Synaptic vesicle glycoprotein 2C (727 aa).

Residues 1–57 (MEDSYKDRTSLMKGAKDIAKEVKKQTVKKVNQAVDRAQDEYTQRSYSRFQDEEDDDD) are interaction with SYT1. Residues 1-154 (MEDSYKDRTS…CGHGRFQWAL (154 aa)) lie on the Cytoplasmic side of the membrane. Positions 22 to 128 (VKKQTVKKVN…DRRELESERR (107 aa)) are disordered. A phosphoserine mark is found at S75 and S76. Position 79 is a phosphothreonine (T79). Positions 113–128 (KGDEYKDRRELESERR) are enriched in basic and acidic residues. The helical transmembrane segment at 155 to 175 (FFVLGMALMADGVEVFVVGFV) threads the bilayer. Residues 176–191 (LPSAETDLCIPNSGSG) lie on the Extracellular side of the membrane. Residues 192–212 (WLGSIVYLGMMVGAFFWGGLA) form a helical membrane-spanning segment. Residues 213–226 (DKVGRKQSLLICMS) lie on the Cytoplasmic side of the membrane. The helical transmembrane segment at 227-247 (VNGFFAFLSSFVQGYGFFLVC) threads the bilayer. Position 248 (R248) is a topological domain, extracellular. A helical transmembrane segment spans residues 249–269 (LLSGFGIGGAIPTVFSYFAEV). Residues 270 to 280 (LAREKRGEHLS) are Cytoplasmic-facing. Residues 281–301 (WLCMFWMIGGIYASAMAWAII) form a helical membrane-spanning segment. Topologically, residues 302-320 (PHYGWSFSMGSAYQFHSWR) are extracellular. Residues 321–341 (VFVIVCALPCVSSVVALTFMP) traverse the membrane as a helical segment. Residues 342-437 (ESPRFLLEVG…PVRENTIKLT (96 aa)) lie on the Cytoplasmic side of the membrane. The chain crosses the membrane as a helical span at residues 438–458 (IVWFTLSFGYYGLSVWFPDVI). Topologically, residues 459 to 578 (KHLQSDEYAL…CQITFDDDYS (120 aa)) are extracellular. Y466 is modified (phosphotyrosine). N-linked (GlcNAc...) asparagine glycans are attached at residues N480, N484, N534, N559, and N565. The chain crosses the membrane as a helical span at residues 579-599 (AYWIYFVNFLGTLAVLPGNIV). The Cytoplasmic segment spans residues 600-609 (SALLMDRIGR). A helical transmembrane segment spans residues 610–630 (LTMLGGSMVLSGISCFFLWFG). The Extracellular segment spans residues 631 to 636 (TSESMM). Residues 637–657 (IGMLCLYNGLTISAWNSLDVV) traverse the membrane as a helical segment. At 658 to 670 (TVELYPTDRRATG) the chain is on the cytoplasmic side. Residues 671-693 (FGFLNALCKAAAVLGNLIFGSLV) form a helical membrane-spanning segment. Residues 694–697 (SITK) are Extracellular-facing. A helical membrane pass occupies residues 698–716 (AIPILLASTVLVCGGLVGL). Over 717–727 (RLPDTRTQVLM) the chain is Cytoplasmic.

It belongs to the major facilitator superfamily. Interacts with SYT1 in a calcium-dependent manner. In terms of assembly, (Microbial infection) Interacts with C.botulinum neurotoxin type A (BoNT/A, botA). As to quaternary structure, (Microbial infection) Interacts with C.botulinum neurotoxin type D (BoNT/D, botD). N-glycosylated. Expressed in specific subsets of conventional synapses in the retina (at protein level). Expressed in diaphragm motor nerve terminals (at protein level). Expressed in a subset of hippocampus neurons (at protein level).

It is found in the cytoplasmic vesicle. The protein resides in the secretory vesicle. The protein localises to the synaptic vesicle membrane. Functionally, plays a role in the control of regulated secretion in neural and endocrine cells, enhancing selectively low-frequency neurotransmission. Positively regulates vesicle fusion by maintaining the readily releasable pool of secretory vesicles. Its function is as follows. (Microbial infection) Receptor for C.botulinum neurotoxin type A (BoNT/A, botA); the toxin binds Sv2c via extracellular loop 4. (Microbial infection) Possible receptor for C.botulinum neurotoxin type D (BoNT/D, botD). In Mus musculus (Mouse), this protein is Synaptic vesicle glycoprotein 2C (Sv2c).